A 168-amino-acid polypeptide reads, in one-letter code: Small ribosomal subunit protein bS6 (168 aa).

Positions 97 to 168 (EEGPSAMMRK…APAPAAATEE (72 aa)) are disordered. Basic and acidic residues predominate over residues 105–158 (RKADRDRDRDDRGGFRGDREGGFRGDREGGFRGGDREGGGFRGDRGPRRPRDDA).

Belongs to the bacterial ribosomal protein bS6 family.

Binds together with bS18 to 16S ribosomal RNA. This is Small ribosomal subunit protein bS6 from Rhodopseudomonas palustris (strain BisB18).